Consider the following 28-residue polypeptide: leu operon leader peptide (28 aa).

In terms of biological role, involved in control of the biosynthesis of leucine. In Shigella flexneri, this protein is leu operon leader peptide (leuL).